We begin with the raw amino-acid sequence, 205 residues long: uncharacterized protein (205 aa).

The 61-residue stretch at 11–71 (KTRRALVDAA…EMVDEAGLML (61 aa)) folds into the HTH tetR-type domain.

This is an uncharacterized protein from Haemophilus influenzae (strain ATCC 51907 / DSM 11121 / KW20 / Rd).